Here is a 769-residue protein sequence, read N- to C-terminus: MNIYNKLRAREHGYGNERTYDFALRRLSVAKEDSWRGIAPANYCPDFNPEPPIFSAKFANCDGYRHILAIANEDGKITLQDTTQRNHQPEEQSLVGPQCHFNAVFDLEWAPGQMRFVSASGDHTARLWEVAGSGIRGLNSYVGHTRSVKSAAFKRTDPAVFATGGRDGAILIWDIRANLNMDLTSRVDNCIYSGHTGGPGTPVSQRKQRTRTPKMAGGTTSSSITGLAFQDNDTLISCGAGDGVIKVWDLRRNYTAYKKEPLPRHKLPYAGSSTFRGFTNLIVDASGTRLYANCMDNTIYCYNLASYSQRPLACYKGLLNSTFYIKSCLSPDGKYLLSGSSDERAYIWNLDHAEEPLVALAGHTVEVTCVAWGSSHDCPIVTCSDDARHKIWRIGPDLDGLSEAERAEKYRGTASYVREFGKKAFGPSSGNHKYNLRDLESTPRSLKRLMDQNERTPGSVEKTTTKRSFLEMLGVAGQETEATEQPQKRAKPLESRGRRLFGPSSQETACRHIQLQSINEEDASPSKRQKENSAAEDVSPLHKLLSTPSHSPLSENVNHVYTSPPTTSAAAAAVAADALNPPPISAAIYSPTSNLPNYVLDGEAPHLGIMSPKRKAKEKVDWLTNIRKQKLMSGRAHVTLSEKISEEQQADVLASPRLQSLRQSECSPRIHASPRRRISHTDGGGGTPAGSSSHSHSQSQPKTPTSSRRNSETTLLRFFSIQRSSSVPAEETTTTNAAPSSSDPHPPAVTAPAATPLSMRTPTTAVGSD.

WD repeat units follow at residues Cys-99–Glu-129, Gly-143–Asp-174, Gly-194–Asp-249, Arg-264–Asn-303, Asn-320–Asn-349, and Gly-362–Arg-393. Residues Thr-196–Ser-221 form a disordered region. Thr-201 is modified (phosphothreonine). Position 204 is a phosphoserine (Ser-204). Disordered regions lie at residues Arg-448–Arg-467, Ala-476–Thr-562, and Ser-655–Asp-769. Thr-456 is modified (phosphothreonine). Ser-459 bears the Phosphoserine mark. Residues Pro-503 to Ile-518 show a composition bias toward polar residues. Position 524 is a phosphoserine (Ser-524). Positions Ser-524 to Ser-533 are enriched in basic and acidic residues. The span at Ser-546–Thr-562 shows a compositional bias: polar residues. Ser-655 is subject to Phosphoserine. Polar residues predominate over residues Arg-657–Cys-666. 3 positions are modified to phosphoserine: Ser-679, Ser-691, and Ser-711. Over residues Ala-689–Pro-704 the composition is skewed to low complexity. A compositionally biased stretch (polar residues) spans Thr-705–Thr-714. The span at Pro-728 to Asp-743 shows a compositional bias: low complexity. Residues Ser-758–Asp-769 are compositionally biased toward polar residues.

This sequence belongs to the WD repeat cdt2 family. Component of the DCX(DTL) E3 ubiquitin ligase complex, at least composed of Cul-4, pic/DDB1, l(2)dtl/CDT2 and Roc1a. In terms of tissue distribution, ubiquitously expressed during embryogenesis with no sign of tissue specificity in expression up to stage 17.

It localises to the cytoplasm. It participates in protein modification; protein ubiquitination. Its function is as follows. Substrate-specific adapter of a DCX (DDB1-CUL4-X-box) E3 ubiquitin-protein ligase complex required for cell cycle control. The DCX(DTL) complex, also named CRL4(CDT2) complex, mediates the polyubiquitination and subsequent degradation of E2f during S phase. E2f degradation is necessary to ensure proper development. Substrates require their interaction with PCNA for their polyubiquitination: substrates interact with PCNA via their PIP-box, leading to recruit the DCX(DTL) complex. This is Protein lethal(2)denticleless (l(2)dtl) from Drosophila melanogaster (Fruit fly).